The sequence spans 132 residues: Phosphoribosyl-AMP cyclohydrolase (132 aa).

Asp-82 lines the Mg(2+) pocket. A Zn(2+)-binding site is contributed by Cys-83. Asp-84 and Asp-86 together coordinate Mg(2+). The Zn(2+) site is built by Cys-100 and Cys-107.

The protein belongs to the PRA-CH family. In terms of assembly, homodimer. It depends on Mg(2+) as a cofactor. Requires Zn(2+) as cofactor.

The protein localises to the cytoplasm. The enzyme catalyses 1-(5-phospho-beta-D-ribosyl)-5'-AMP + H2O = 1-(5-phospho-beta-D-ribosyl)-5-[(5-phospho-beta-D-ribosylamino)methylideneamino]imidazole-4-carboxamide. Its pathway is amino-acid biosynthesis; L-histidine biosynthesis; L-histidine from 5-phospho-alpha-D-ribose 1-diphosphate: step 3/9. In terms of biological role, catalyzes the hydrolysis of the adenine ring of phosphoribosyl-AMP. In Dechloromonas aromatica (strain RCB), this protein is Phosphoribosyl-AMP cyclohydrolase.